A 165-amino-acid polypeptide reads, in one-letter code: Large ribosomal subunit protein uL10 (165 aa).

The protein belongs to the universal ribosomal protein uL10 family. As to quaternary structure, part of the ribosomal stalk of the 50S ribosomal subunit. The N-terminus interacts with L11 and the large rRNA to form the base of the stalk. The C-terminus forms an elongated spine to which L12 dimers bind in a sequential fashion forming a multimeric L10(L12)X complex.

Functionally, forms part of the ribosomal stalk, playing a central role in the interaction of the ribosome with GTP-bound translation factors. This Buchnera aphidicola subsp. Acyrthosiphon pisum (strain 5A) protein is Large ribosomal subunit protein uL10.